The following is a 589-amino-acid chain: CTP synthase (589 aa).

Residues 1 to 281 (MPQSRTHSRT…DAYVVRQLGL (281 aa)) are amidoligase domain. Ser-23 serves as a coordination point for CTP. Ser-23 contacts UTP. ATP-binding positions include 24-29 (SLGKGL) and Asp-81. 2 residues coordinate Mg(2+): Asp-81 and Glu-155. Residues 162-164 (DIE), 202-207 (KTKPTQ), and Lys-238 contribute to the CTP site. Residues 202 to 207 (KTKPTQ) and Lys-238 each bind UTP. Residues 306–554 (RIALVGKYVD…VDAALRHKLE (249 aa)) form the Glutamine amidotransferase type-1 domain. Gly-369 lines the L-glutamine pocket. Cys-396 serves as the catalytic Nucleophile; for glutamine hydrolysis. Residues 397-400 (LGLQ), Glu-419, and Arg-480 each bind L-glutamine. Active-site residues include His-527 and Glu-529. The segment at 562–589 (HGEERAAADDEIAESADRDEVASVDSAG) is disordered.

This sequence belongs to the CTP synthase family. As to quaternary structure, homotetramer.

It catalyses the reaction UTP + L-glutamine + ATP + H2O = CTP + L-glutamate + ADP + phosphate + 2 H(+). The catalysed reaction is L-glutamine + H2O = L-glutamate + NH4(+). It carries out the reaction UTP + NH4(+) + ATP = CTP + ADP + phosphate + 2 H(+). It functions in the pathway pyrimidine metabolism; CTP biosynthesis via de novo pathway; CTP from UDP: step 2/2. Allosterically activated by GTP, when glutamine is the substrate; GTP has no effect on the reaction when ammonia is the substrate. The allosteric effector GTP functions by stabilizing the protein conformation that binds the tetrahedral intermediate(s) formed during glutamine hydrolysis. Inhibited by the product CTP, via allosteric rather than competitive inhibition. Functionally, catalyzes the ATP-dependent amination of UTP to CTP with either L-glutamine or ammonia as the source of nitrogen. Regulates intracellular CTP levels through interactions with the four ribonucleotide triphosphates. The chain is CTP synthase from Rhodococcus opacus (strain B4).